The sequence spans 285 residues: Eukaryotic translation initiation factor 3 subunit F-2 (285 aa).

The MPN domain maps to 11-145; that stretch reads VFLKPLVLFQ…TRLYCAVEMG (135 aa).

It belongs to the eIF-3 subunit F family. As to quaternary structure, component of the eukaryotic translation initiation factor 3 (eIF-3) complex. The eIF-3 complex interacts with pix.

The protein localises to the cytoplasm. Its function is as follows. Component of the eukaryotic translation initiation factor 3 (eIF-3) complex, which is involved in protein synthesis of a specialized repertoire of mRNAs and, together with other initiation factors, stimulates binding of mRNA and methionyl-tRNAi to the 40S ribosome. The eIF-3 complex specifically targets and initiates translation of a subset of mRNAs involved in cell proliferation. This chain is Eukaryotic translation initiation factor 3 subunit F-2, found in Drosophila sechellia (Fruit fly).